Here is a 241-residue protein sequence, read N- to C-terminus: Transcriptional regulatory protein SrrA (241 aa).

The region spanning 4–117 is the Response regulatory domain; that stretch reads EILIVDDEDR…EVVLRVKALL (114 aa). D53 is modified (4-aspartylphosphate). Residues 133 to 233 constitute a DNA-binding region (ompR/PhoB-type); sequence RDVIEFKHLE…VWGVGYKFEV (101 aa).

In terms of processing, phosphorylated by SrrB.

It localises to the cytoplasm. In terms of biological role, member of the two-component regulatory system SrrA/SrrB, which is involved in the global regulation of staphylococcal virulence factors in response to environmental oxygen levels as well as biofilm formation. Also plays an essential role in host-derived nitric oxide resistance by regulating hmp/flavohemoglobin, an enzyme that detoxifies nitric oxide by converting it to nitrate. Functions as a transcription regulator by direct binding to promoter regions of target genes. The protein is Transcriptional regulatory protein SrrA (srrA) of Staphylococcus aureus (strain NCTC 8325 / PS 47).